A 188-amino-acid polypeptide reads, in one-letter code: dITP/XTP pyrophosphatase (188 aa).

7–12 (TGNIGK) contributes to the substrate binding site. Residues Glu-36 and Asp-65 each contribute to the Mg(2+) site. Asp-65 (proton acceptor) is an active-site residue. Substrate is bound by residues Ser-66, 141–144 (FGYD), Lys-164, and 169–170 (HR).

Belongs to the HAM1 NTPase family. Homodimer. The cofactor is Mg(2+).

It catalyses the reaction XTP + H2O = XMP + diphosphate + H(+). The catalysed reaction is dITP + H2O = dIMP + diphosphate + H(+). The enzyme catalyses ITP + H2O = IMP + diphosphate + H(+). Functionally, pyrophosphatase that catalyzes the hydrolysis of nucleoside triphosphates to their monophosphate derivatives, with a high preference for the non-canonical purine nucleotides XTP (xanthosine triphosphate), dITP (deoxyinosine triphosphate) and ITP. Seems to function as a house-cleaning enzyme that removes non-canonical purine nucleotides from the nucleotide pool, thus preventing their incorporation into DNA/RNA and avoiding chromosomal lesions. In Methanopyrus kandleri (strain AV19 / DSM 6324 / JCM 9639 / NBRC 100938), this protein is dITP/XTP pyrophosphatase.